A 255-amino-acid chain; its full sequence is MQLTNKKIVVTGVSSGIGAETARVLRSHGATVIGVDRNMPSLTLDAFVQADLSHPEGIDKAISQLPEKIDGLCNIAGVPGTADPQLVANVNYLGLKYLTEAVLSRIQPGGSIVNVSSVLGAEWPARLQLHKELGSVVGFSEGQAWLKQNPVAPEFCYQYFKEALIVWSQVQAQEWFMRTSVRMNCIAPGPVFTPILNEFVTMLGQERTQADAHRIKRPAYADEVAAVIAFMCAEESRWINGINIPVDGGLASTYV.

NAD(+)-binding positions include 12–17, Asp36, 51–52, and Gly77; these read GVSSGI and DL. Position 117 (Ser117) interacts with substrate. Residues Tyr157 and Lys161 each coordinate NAD(+). The active-site Proton acceptor is Tyr157.

The protein belongs to the short-chain dehydrogenases/reductases (SDR) family.

The catalysed reaction is (E)-coniferol + NADP(+) = (E)-coniferaldehyde + NADPH + H(+). Its function is as follows. Catalyzes the conversion of coniferyl alcohol into coniferyl aldehyde in the eugenol degradation pathway. Specific for coniferyl alcohol; does not act on cinnamyl alcohol, 4-coumaryl alcohol or sinapyl alcohol. This is Coniferyl-alcohol dehydrogenase (calA) from Pseudomonas sp. (strain HR199 / DSM 7063).